A 146-amino-acid polypeptide reads, in one-letter code: uncharacterized protein (146 aa).

This is an uncharacterized protein from Aquifex aeolicus (strain VF5).